The sequence spans 103 residues: Urease subunit gamma (103 aa).

It belongs to the urease gamma subunit family. As to quaternary structure, heterotrimer of UreA (gamma), UreB (beta) and UreC (alpha) subunits. Three heterotrimers associate to form the active enzyme.

Its subcellular location is the cytoplasm. It carries out the reaction urea + 2 H2O + H(+) = hydrogencarbonate + 2 NH4(+). The protein operates within nitrogen metabolism; urea degradation; CO(2) and NH(3) from urea (urease route): step 1/1. The sequence is that of Urease subunit gamma from Paracoccus denitrificans (strain Pd 1222).